Consider the following 380-residue polypeptide: GATOR1 complex protein NPRL2 (380 aa).

The segment at 1–133 is interaction with PDPK1; that stretch reads MGSSCRIECI…SKQKLVPIMT (133 aa). Arginine 78 provides a ligand contact to GDP. Arginine 78 carries the asymmetric dimethylarginine modification. Residues lysine 158 and lysine 357 each participate in a glycyl lysine isopeptide (Lys-Gly) (interchain with G-Cter in ubiquitin) cross-link.

It belongs to the NPR2 family. In terms of assembly, within the GATOR complex, component of the GATOR1 subcomplex, made of DEPDC5, NPRL2 and NPRL3. GATOR1 mediates the strong interaction of the GATOR complex with small GTPases Rag (RagA/RRAGA, RagB/RRAGB, RagC/RRAGC and/or RagD/RRAGD) heterodimers. GATOR1 interacts with GPR155/LYCHOS; interaction takes place in presence of cholesterol and prevents interaction between GATOR1 and KICSTOR. Interacts with PDPK1. In the presence of abundant amino acids, ubiquitinated at Lys-158 and Lys-357 via 'Lys-6'-linked ubiquitination by the WDR24 component of the GATOR2 complex, thereby inhibiting the GATOR1 complex and promoting mTORC1 activation. Post-translationally, asymmetric dimethylation at Arg-78 by PRMT1 inhibits the GTPase activator activity of the GATOR1 complex and consequently inducing timely mTORC1 activation under methionine-sufficient conditions.

Its subcellular location is the lysosome membrane. Its function is as follows. Catalytic component of the GATOR1 complex, a multiprotein complex that functions as an inhibitor of the amino acid-sensing branch of the mTORC1 pathway. In response to amino acid depletion, the GATOR1 complex has GTPase activating protein (GAP) activity and strongly increases GTP hydrolysis by RagA/RRAGA (or RagB/RRAGB) within heterodimeric Rag complexes, thereby turning them into their inactive GDP-bound form, releasing mTORC1 from lysosomal surface and inhibiting mTORC1 signaling. In the presence of abundant amino acids, the GATOR1 complex is ubiquitinated and inhibited by GATOR2. Within the GATOR1 complex, NPRL2 constitutes the catalytic subunit that mediates the GTPase activator activity and under methionine-sufficient conditions, the GTPase activator activity is inhibited by PRMT1 through methylation and consequently inducing timely mTORC1 activation. Functionally, suppresses Src-dependent tyrosine phosphorylation and activation of PDPK1 and its downstream signaling. Down-regulates PDPK1 kinase activity by interfering with tyrosine phosphorylation at 'Tyr-9', 'Tyr-373' and 'Tyr-376' residues. May act as a tumor suppressor. Suppresses cell growth and enhances sensitivity to various anticancer drugs. This chain is GATOR1 complex protein NPRL2, found in Mus musculus (Mouse).